Reading from the N-terminus, the 281-residue chain is Large ribosomal subunit protein uL22 (281 aa).

Residues 1 to 225 (MASPMGSTAS…KAGGAAEAEV (225 aa)) are large ribosomal subunit protein uL22. Disordered regions lie at residues 137-175 (RATKKAVPKGARHRRRLTGAGKPAASAATETPAAQPVAA) and 199-281 (AVAS…GGTR). Positions 139 to 153 (TKKAVPKGARHRRRL) are enriched in basic residues. Composition is skewed to low complexity over residues 159-175 (PAASAATETPAAQPVAA) and 199-239 (AVAS…APAA). The unknown stretch occupies residues 226–281 (ATTDEQTTETAPAAEAEKPAVRRPAARKSTTSARRRAAETEGHDSDAESTDEGGTR). Basic and acidic residues predominate over residues 261–271 (RAAETEGHDSD). The span at 272 to 281 (AESTDEGGTR) shows a compositional bias: acidic residues.

The protein belongs to the universal ribosomal protein uL22 family. As to quaternary structure, part of the 50S ribosomal subunit.

In terms of biological role, the globular domain of the protein is located near the polypeptide exit tunnel on the outside of the subunit, while an extended beta-hairpin is found that lines the wall of the exit tunnel in the center of the 70S ribosome. Functionally, this protein binds specifically to 23S rRNA; its binding is stimulated by other ribosomal proteins, e.g. L4, L17, and L20. It is important during the early stages of 50S assembly. It makes multiple contacts with different domains of the 23S rRNA in the assembled 50S subunit and ribosome. The polypeptide is Large ribosomal subunit protein uL22 (Acidothermus cellulolyticus (strain ATCC 43068 / DSM 8971 / 11B)).